Reading from the N-terminus, the 581-residue chain is Aspartate--tRNA ligase (581 aa).

An L-aspartate-binding site is contributed by Glu-170. Residues 194–197 (QLFK) form an aspartate region. Position 216 (Arg-216) interacts with L-aspartate. Residues 216–218 (RDE) and Gln-225 contribute to the ATP site. His-439 contacts L-aspartate. Glu-468 lines the ATP pocket. Arg-475 lines the L-aspartate pocket. Residue 520–523 (GFDR) participates in ATP binding.

This sequence belongs to the class-II aminoacyl-tRNA synthetase family. Type 1 subfamily. As to quaternary structure, homodimer.

It localises to the cytoplasm. It catalyses the reaction tRNA(Asp) + L-aspartate + ATP = L-aspartyl-tRNA(Asp) + AMP + diphosphate. Functionally, catalyzes the attachment of L-aspartate to tRNA(Asp) in a two-step reaction: L-aspartate is first activated by ATP to form Asp-AMP and then transferred to the acceptor end of tRNA(Asp). The sequence is that of Aspartate--tRNA ligase from Thermosipho melanesiensis (strain DSM 12029 / CIP 104789 / BI429).